A 344-amino-acid polypeptide reads, in one-letter code: Probable dual-specificity RNA methyltransferase RlmN (344 aa).

The Proton acceptor role is filled by Glu92. One can recognise a Radical SAM core domain in the interval 98-325 (DEDRATLCVS…TTIRASRGED (228 aa)). A disulfide bridge links Cys105 with Cys330. Residues Cys112, Cys116, and Cys119 each contribute to the [4Fe-4S] cluster site. S-adenosyl-L-methionine-binding positions include 157 to 158 (GE), Ser189, 211 to 213 (SLH), and His287. The active-site S-methylcysteine intermediate is Cys330.

Belongs to the radical SAM superfamily. RlmN family. [4Fe-4S] cluster serves as cofactor.

It is found in the cytoplasm. The enzyme catalyses adenosine(2503) in 23S rRNA + 2 reduced [2Fe-2S]-[ferredoxin] + 2 S-adenosyl-L-methionine = 2-methyladenosine(2503) in 23S rRNA + 5'-deoxyadenosine + L-methionine + 2 oxidized [2Fe-2S]-[ferredoxin] + S-adenosyl-L-homocysteine. It catalyses the reaction adenosine(37) in tRNA + 2 reduced [2Fe-2S]-[ferredoxin] + 2 S-adenosyl-L-methionine = 2-methyladenosine(37) in tRNA + 5'-deoxyadenosine + L-methionine + 2 oxidized [2Fe-2S]-[ferredoxin] + S-adenosyl-L-homocysteine. Functionally, specifically methylates position 2 of adenine 2503 in 23S rRNA and position 2 of adenine 37 in tRNAs. The protein is Probable dual-specificity RNA methyltransferase RlmN of Bacteroides fragilis (strain YCH46).